Consider the following 512-residue polypeptide: Glutamyl-tRNA(Gln) amidotransferase subunit A (512 aa).

Catalysis depends on charge relay system residues lysine 82 and serine 157. Catalysis depends on serine 181, which acts as the Acyl-ester intermediate.

It belongs to the amidase family. GatA subfamily. As to quaternary structure, heterotrimer of A, B and C subunits.

The enzyme catalyses L-glutamyl-tRNA(Gln) + L-glutamine + ATP + H2O = L-glutaminyl-tRNA(Gln) + L-glutamate + ADP + phosphate + H(+). Functionally, allows the formation of correctly charged Gln-tRNA(Gln) through the transamidation of misacylated Glu-tRNA(Gln) in organisms which lack glutaminyl-tRNA synthetase. The reaction takes place in the presence of glutamine and ATP through an activated gamma-phospho-Glu-tRNA(Gln). In Bordetella pertussis (strain Tohama I / ATCC BAA-589 / NCTC 13251), this protein is Glutamyl-tRNA(Gln) amidotransferase subunit A.